Here is a 76-residue protein sequence, read N- to C-terminus: Probable 26S proteasome complex subunit dss-1 (76 aa).

2 disordered regions span residues 1–28 (MSST…FEEF) and 52–76 (DDET…HPIA). 2 stretches are compositionally biased toward basic and acidic residues: residues 7–20 (TKKD…KKET) and 57–70 (ESEF…ELRK).

Belongs to the DSS1/SEM1 family. Part of the 26S proteasome.

It is found in the nucleus. Its subcellular location is the cytoplasm. Subunit of the 26S proteasome which plays a role in ubiquitin-dependent proteolysis. Has an essential role in oogenesis and larval growth. Required for intestinal function and default lifespan. The chain is Probable 26S proteasome complex subunit dss-1 from Caenorhabditis briggsae.